The sequence spans 180 residues: Molybdopterin synthase catalytic subunit (180 aa).

Substrate is bound by residues 123-124, Lys-139, and 146-148; these read HR and KLE. The interval 161–180 is disordered; sequence RDGQKGVKVEGGKEGVEAKH.

This sequence belongs to the MoaE family. MOCS2B subfamily. Heterotetramer; composed of 2 small (MOCS2A) and 2 large (MOCS2B) subunits.

Its subcellular location is the cytoplasm. It catalyses the reaction 2 [molybdopterin-synthase sulfur-carrier protein]-C-terminal-Gly-aminoethanethioate + cyclic pyranopterin phosphate + H2O = molybdopterin + 2 [molybdopterin-synthase sulfur-carrier protein]-C-terminal Gly-Gly + 2 H(+). The protein operates within cofactor biosynthesis; molybdopterin biosynthesis. Catalytic subunit of the molybdopterin synthase complex, a complex that catalyzes the conversion of precursor Z into molybdopterin. Acts by mediating the incorporation of 2 sulfur atoms from thiocarboxylated MOCS2A into precursor Z to generate a dithiolene group. In Pyrenophora tritici-repentis (strain Pt-1C-BFP) (Wheat tan spot fungus), this protein is Molybdopterin synthase catalytic subunit.